Here is a 134-residue protein sequence, read N- to C-terminus: Profilin-4 (134 aa).

This sequence belongs to the profilin family. In terms of assembly, occurs in many kinds of cells as a complex with monomeric actin in a 1:1 ratio. In terms of tissue distribution, specifically expressed in mature and germinating pollen grains, and growing pollen tubes (at protein level).

It localises to the cytoplasm. The protein resides in the cytoskeleton. In terms of biological role, binds to actin monomers and regulates the organization of the actin cytoskeleton. At high concentrations, profilin prevents the polymerization of actin, whereas it enhances it at low concentrations. At low concentrations, associates with the poly-proline motif of formins to enhance actin filament elongation rate. Acts redundantly with PRF5 to regulate apical actin polymerization at the tip of pollen tube and control polarized pollen tube growth. Functions probably by favoring formin-mediated actin polymerization at pollen tube tips. In Arabidopsis thaliana (Mouse-ear cress), this protein is Profilin-4.